The sequence spans 507 residues: Maturase K (507 aa).

Belongs to the intron maturase 2 family. MatK subfamily.

The protein resides in the plastid. It localises to the chloroplast. Its function is as follows. Usually encoded in the trnK tRNA gene intron. Probably assists in splicing its own and other chloroplast group II introns. This Euryale ferox (Gorgon plant) protein is Maturase K.